The primary structure comprises 569 residues: 4-coumarate--CoA ligase 2 (569 aa).

Residues Ser-219, Ser-220, Gly-221, Thr-222, Thr-223, and Lys-227 each coordinate ATP. The (E)-4-coumaroyl-AMP site is built by Phe-269 and Ser-273. CoA is bound at residue Arg-290. The interval 292 to 361 is SBD1; the sequence is EMGAMLGAIE…ARLPQAIFGQ (70 aa). (E)-4-coumaroyl-AMP-binding residues include Ala-339, Gln-361, Gly-362, Thr-366, and Met-374. Residues Gln-361, Gly-362, and Thr-366 each contribute to the ATP site. Residues 362-429 are SBD2; sequence GYGMTEAGPV…IRGPQIMKGY (68 aa). Residues Asp-450 and Arg-465 each contribute to the ATP site. Residues Lys-467 and Lys-471 each coordinate (E)-4-coumaroyl-AMP. Positions 473 and 474 each coordinate CoA. Lys-556 is an ATP binding site.

It belongs to the ATP-dependent AMP-binding enzyme family. Mg(2+) is required as a cofactor. As to expression, expressed in roots, stems, leaf blades, leaf sheaths and spikelets.

It catalyses the reaction (E)-ferulate + ATP + CoA = (E)-feruloyl-CoA + AMP + diphosphate. It carries out the reaction (E)-4-coumarate + ATP + CoA = (E)-4-coumaroyl-CoA + AMP + diphosphate. The catalysed reaction is (E)-caffeate + ATP + CoA = (E)-caffeoyl-CoA + AMP + diphosphate. The enzyme catalyses (E)-cinnamate + ATP + CoA = (E)-cinnamoyl-CoA + AMP + diphosphate. It catalyses the reaction (E)-ferulate + ATP + H(+) = (E)-feruloyl-AMP + diphosphate. It carries out the reaction (E)-feruloyl-AMP + CoA = (E)-feruloyl-CoA + AMP + H(+). The catalysed reaction is (E)-4-coumarate + ATP + H(+) = (E)-4-coumaroyl-AMP + diphosphate. The enzyme catalyses (E)-4-coumaroyl-AMP + CoA = (E)-4-coumaroyl-CoA + AMP + H(+). It catalyses the reaction (E)-caffeate + ATP + H(+) = (E)-caffeoyl-AMP + diphosphate. It carries out the reaction (E)-caffeoyl-AMP + CoA = (E)-caffeoyl-CoA + AMP + H(+). Its pathway is phytoalexin biosynthesis; 3,4',5-trihydroxystilbene biosynthesis; 3,4',5-trihydroxystilbene from trans-4-coumarate: step 1/2. Functionally, involved in the phenylpropanoid metabolism by mediating the activation of a number of hydroxycinnamates for the biosynthesis of monolignols and other phenolic secondary metabolites. Catalyzes the formation of CoA esters of cinnamate, 4-coumarate, caffeate and ferulate. Is more efficient with substrates in the following order: ferulate &gt; 4-coumarate &gt; caffeate &gt; cinnamate. Cannot convert sinapate to its corresponding CoA ester. Follows a two-step reaction mechanism, wherein the carboxylate substrate first undergoes adenylation by ATP, followed by a thioesterification in the presence of CoA to yield the final CoA thioester. This Oryza sativa subsp. japonica (Rice) protein is 4-coumarate--CoA ligase 2.